A 309-amino-acid chain; its full sequence is Uracil phosphoribosyltransferase homolog (309 aa).

Residues 1 to 41 (MATELQCPDSMPCHNQQVNSASTPSPEQLRPGDPILDHAGG) are disordered. Over residues 13–26 (CHNQQVNSASTPSP) the composition is skewed to polar residues. A Phosphoserine modification is found at Ser-25. GTP is bound by residues Arg-133, Arg-142, and 176-179 (EKGN). Arg-186 lines the 5-phospho-alpha-D-ribose 1-diphosphate pocket. Residues Arg-203 and Arg-232 each coordinate GTP. 238–246 (YPILSTGNT) is a binding site for 5-phospho-alpha-D-ribose 1-diphosphate. 299–301 (THF) serves as a coordination point for uracil.

Belongs to the UPRTase family.

The protein localises to the cytoplasm. It is found in the nucleus. This chain is Uracil phosphoribosyltransferase homolog (UPRT), found in Macaca fascicularis (Crab-eating macaque).